Consider the following 339-residue polypeptide: 2-halobenzoate 1,2-dioxygenase electron transfer component (339 aa).

The 2Fe-2S ferredoxin-type domain occupies 3–96 (HSIALRFEDD…DCVVRILASS (94 aa)). [2Fe-2S] cluster is bound by residues cysteine 40, cysteine 45, cysteine 48, and cysteine 80. Residues 98-336 (ACQVKKSTMT…NFYFEKFAPT (239 aa)) form a ferredoxin-reductase region. The FAD-binding FR-type domain maps to 103-203 (KSTMTGQMTE…DGPYGAFYLR (101 aa)).

This sequence belongs to the bacterial ring-hydroxylating dioxygenase ferredoxin reductase family. As to quaternary structure, monomer. It is part of 2-halobenzoate dioxygenase two component enzyme system. The other component is a dioxygenase component consisting of 3 large (CbdA) subunits and 3 small (CbdB) subunits. The cofactor is FAD. [2Fe-2S] cluster serves as cofactor.

It catalyses the reaction 2 reduced [2Fe-2S]-[ferredoxin] + NAD(+) + H(+) = 2 oxidized [2Fe-2S]-[ferredoxin] + NADH. It participates in xenobiotic degradation; benzoate degradation via CoA ligation. In terms of biological role, electron transfer component of 2-halobenzoate 1,2-dioxygenase system. This Burkholderia cepacia (Pseudomonas cepacia) protein is 2-halobenzoate 1,2-dioxygenase electron transfer component (cbdC).